The sequence spans 148 residues: Large ribosomal subunit protein uL15 (148 aa).

A disordered region spans residues 1-51 (MNLSNLKPAEGSTKTRKRIGRGPGSGLGGTSTRGHKGAKSRSGYKNKIGFE). Over residues 21-31 (RGPGSGLGGTS) the composition is skewed to gly residues. The segment covering 33-44 (RGHKGAKSRSGY) has biased composition (basic residues).

It belongs to the universal ribosomal protein uL15 family. In terms of assembly, part of the 50S ribosomal subunit.

In terms of biological role, binds to the 23S rRNA. The chain is Large ribosomal subunit protein uL15 from Parabacteroides distasonis (strain ATCC 8503 / DSM 20701 / CIP 104284 / JCM 5825 / NCTC 11152).